A 400-amino-acid chain; its full sequence is Lysophospholipid transporter LplT (400 aa).

A run of 12 helical transmembrane segments spans residues 19-39 (VIVAQFLSAFGDNALLFATLA), 53-73 (VLQMVFVGAYILFAPFVGQIA), 91-111 (AGAAGICLGVNPFVGYTLVGI), 139-159 (LMEASTIAAILLGSVAGGVLA), 164-184 (IAALVACALAYAGAVAANLFI), 195-213 (SWRLSAMTRSFFSACVVLW), 227-247 (LFWGAGVTLRFLLVLWVPVAL), 257-277 (YLNAMVAVGIVVGAGAAAKLV), 281-301 (TVSRCMPAGILIGVVVAIFSL), 304-324 (ALLPAYALLLLIGMLGGFFVV), 352-372 (NSAMLLMLGLYSLAVLVGVPA), and 373-393 (VAIGIGFGVLFALAIAALWIW).

It belongs to the major facilitator superfamily. LplT (TC 2.A.1.42) family.

Its subcellular location is the cell inner membrane. Catalyzes the facilitated diffusion of 2-acyl-glycero-3-phosphoethanolamine (2-acyl-GPE) into the cell. The sequence is that of Lysophospholipid transporter LplT from Salmonella agona (strain SL483).